The following is a 237-amino-acid chain: Putative exosome complex component rrp40 (237 aa).

In terms of domain architecture, S1 motif spans 67–137 (EDMVIGTIIE…EPEVVCLSQK (71 aa)).

Belongs to the RRP40 family. In terms of assembly, component of the RNA exosome complex.

The protein localises to the cytoplasm. It localises to the nucleus. The protein resides in the nucleolus. Functionally, non-catalytic component of the RNA exosome complex which has 3'-&gt;5' exoribonuclease activity and participates in a multitude of cellular RNA processing and degradation events. The protein is Putative exosome complex component rrp40 (exosc3) of Dictyostelium discoideum (Social amoeba).